The following is a 380-amino-acid chain: ATPase ASNA1 homolog (380 aa).

48–55 provides a ligand contact to ATP; that stretch reads KGGVGKTT. Residue D77 is part of the active site. ATP contacts are provided by E248 and N275.

This sequence belongs to the arsA ATPase family. In terms of assembly, homodimer.

It is found in the cytoplasm. It localises to the endoplasmic reticulum. Its function is as follows. ATPase required for the post-translational delivery of tail-anchored (TA) proteins to the endoplasmic reticulum. Recognizes and selectively binds the transmembrane domain of TA proteins in the cytosol. This complex then targets to the endoplasmic reticulum by membrane-bound receptors, where the tail-anchored protein is released for insertion. This process is regulated by ATP binding and hydrolysis. ATP binding drives the homodimer towards the closed dimer state, facilitating recognition of newly synthesized TA membrane proteins. ATP hydrolysis is required for insertion. Subsequently, the homodimer reverts towards the open dimer state, lowering its affinity for the membrane-bound receptor, and returning it to the cytosol to initiate a new round of targeting. In Plasmodium yoelii yoelii, this protein is ATPase ASNA1 homolog.